We begin with the raw amino-acid sequence, 324 residues long: Beta-ketoacyl-[acyl-carrier-protein] synthase III (324 aa).

Catalysis depends on residues C116 and H251. The interval 252 to 256 (QANLR) is ACP-binding. The active site involves N281.

Belongs to the thiolase-like superfamily. FabH family. In terms of assembly, homodimer.

The protein localises to the cytoplasm. The enzyme catalyses malonyl-[ACP] + acetyl-CoA + H(+) = 3-oxobutanoyl-[ACP] + CO2 + CoA. It functions in the pathway lipid metabolism; fatty acid biosynthesis. Functionally, catalyzes the condensation reaction of fatty acid synthesis by the addition to an acyl acceptor of two carbons from malonyl-ACP. Catalyzes the first condensation reaction which initiates fatty acid synthesis and may therefore play a role in governing the total rate of fatty acid production. Possesses both acetoacetyl-ACP synthase and acetyl transacylase activities. Its substrate specificity determines the biosynthesis of branched-chain and/or straight-chain of fatty acids. The sequence is that of Beta-ketoacyl-[acyl-carrier-protein] synthase III from Xylella fastidiosa (strain 9a5c).